Here is a 398-residue protein sequence, read N- to C-terminus: Probable purine permease 17 (398 aa).

Residues 1–26 (MEMSKASKQTTRHEESEHVQNPEPDQ) form a disordered region. A compositionally biased stretch (basic and acidic residues) spans 11-20 (TRHEESEHVQ). Position 29 is a phosphoserine (Ser29). 10 helical membrane passes run 43-63 (ISVS…MLLL), 88-108 (WTQA…FFIF), 127-147 (LFFL…LFAL), 155-175 (GIFS…TAII), 183-203 (WIII…PDFG), 219-239 (WLAF…QLGF), 258-278 (VLEM…VGLF), 301-321 (VLSL…MIGL), 332-352 (VVHM…FDFM), and 355-375 (VFSW…GSYF).

Belongs to the purine permeases (TC 2.A.7.14) family.

It is found in the membrane. The sequence is that of Probable purine permease 17 (PUP17) from Arabidopsis thaliana (Mouse-ear cress).